The chain runs to 184 residues: Photosystem I assembly protein Ycf4 (184 aa).

The next 2 helical transmembrane spans lie at 22-42 and 57-77; these read FCWA…GTSS and IIFF…LFIS.

The protein belongs to the Ycf4 family.

The protein resides in the plastid. The protein localises to the chloroplast thylakoid membrane. Its function is as follows. Seems to be required for the assembly of the photosystem I complex. In Capsella bursa-pastoris (Shepherd's purse), this protein is Photosystem I assembly protein Ycf4.